Reading from the N-terminus, the 328-residue chain is MALSADVKAELNRVLVTRHDVMTAEVASLLRYTAALHLVGKKIVVESEVDSAETARRLTDMVEQLYKIEPEHQIIGAGNLRRRPRHVLRWTEGGMELARRTELIDRVGRPVRGLPRFIIGGTKDQCVAAWRGAFLAHGYITDPGRSSALEVQTPSNEAALALVGAARRIDVTAKTKEARGVNRVVIRDGDSIGRLLMLMGAQDTREVWEKQRRTRENRAKANRLANFDDANLRRSARAAVAAAARVERALEILDNDVPQHLAHAGQLRVEHKEASLEELGRLAEPPMTKDAVAGRIRRLLSMADKRAEELGLPDTHSAVTSELFNDVD.

The H-T-H motif DNA-binding region spans 275–308 (SLEELGRLAEPPMTKDAVAGRIRRLLSMADKRAE).

Belongs to the WhiA family.

In terms of biological role, involved in cell division and chromosome segregation. This Corynebacterium jeikeium (strain K411) protein is Probable cell division protein WhiA.